A 537-amino-acid polypeptide reads, in one-letter code: Glucose-6-phosphate isomerase (537 aa).

The active-site Proton donor is the Glu341. Active-site residues include His372 and Lys501.

It belongs to the GPI family.

It localises to the cytoplasm. It carries out the reaction alpha-D-glucose 6-phosphate = beta-D-fructose 6-phosphate. It participates in carbohydrate biosynthesis; gluconeogenesis. The protein operates within carbohydrate degradation; glycolysis; D-glyceraldehyde 3-phosphate and glycerone phosphate from D-glucose: step 2/4. Catalyzes the reversible isomerization of glucose-6-phosphate to fructose-6-phosphate. The polypeptide is Glucose-6-phosphate isomerase (Jannaschia sp. (strain CCS1)).